A 153-amino-acid polypeptide reads, in one-letter code: Histone H2A (153 aa).

2 disordered regions span residues 1-27 (MDTG…VSRS) and 131-153 (KAAA…PKKA). Residues 132–147 (AAAAATKEPKSPAKAT) show a composition bias toward low complexity. The SPKK motif signature appears at 149–152 (SPKK).

The protein belongs to the histone H2A family. As to quaternary structure, the nucleosome is a histone octamer containing two molecules each of H2A, H2B, H3 and H4 assembled in one H3-H4 heterotetramer and two H2A-H2B heterodimers. The octamer wraps approximately 147 bp of DNA.

It is found in the nucleus. The protein localises to the chromosome. Its function is as follows. Core component of nucleosome. Nucleosomes wrap and compact DNA into chromatin, limiting DNA accessibility to the cellular machineries which require DNA as a template. Histones thereby play a central role in transcription regulation, DNA repair, DNA replication and chromosomal stability. DNA accessibility is regulated via a complex set of post-translational modifications of histones, also called histone code, and nucleosome remodeling. The protein is Histone H2A of Euphorbia esula (Leafy spurge).